The primary structure comprises 259 residues: FAD-linked sulfhydryl oxidase (259 aa).

It belongs to the baculoviridae p33 family. As to quaternary structure, homodimer.

It is found in the host cytoplasm. Its subcellular location is the host nucleus. It carries out the reaction 2 R'C(R)SH + O2 = R'C(R)S-S(R)CR' + H2O2. In terms of biological role, functional FAD-linked sulfhydryl oxidase that is required for infectious budded virion (BV) production and for the formation of enveloped occluded virion (ODV). This Lepidoptera (butterflies and moths) protein is FAD-linked sulfhydryl oxidase (P33).